The primary structure comprises 203 residues: Peptidyl-tRNA hydrolase (203 aa).

Position 14 (Y14) interacts with tRNA. Residue H19 is the Proton acceptor of the active site. 3 residues coordinate tRNA: Y64, N66, and N112.

It belongs to the PTH family. As to quaternary structure, monomer.

Its subcellular location is the cytoplasm. It carries out the reaction an N-acyl-L-alpha-aminoacyl-tRNA + H2O = an N-acyl-L-amino acid + a tRNA + H(+). Functionally, hydrolyzes ribosome-free peptidyl-tRNAs (with 1 or more amino acids incorporated), which drop off the ribosome during protein synthesis, or as a result of ribosome stalling. In terms of biological role, catalyzes the release of premature peptidyl moieties from peptidyl-tRNA molecules trapped in stalled 50S ribosomal subunits, and thus maintains levels of free tRNAs and 50S ribosomes. This is Peptidyl-tRNA hydrolase from Methylobacterium nodulans (strain LMG 21967 / CNCM I-2342 / ORS 2060).